We begin with the raw amino-acid sequence, 634 residues long: Probable potassium transport system protein Kup (634 aa).

Helical transmembrane passes span 19-39, 62-82, 113-133, 150-170, 177-197, 225-245, 259-279, 291-311, 349-369, 379-399, 406-426, and 431-451; these read AIGLMVGAVGVCYGDIGTSPL, VLSLIFWSLVWVVSIKYVIFV, FVVVAGLIGAALFYGDSMITP, GLEHWTVPLALIVLIGLFLIQ, IGILFGPVMVLWFGALAALGV, IGVAILGATVLALTGAEALYA, WFLLVLPALVLNYFGQGATIL, LLAPGWALLPMVALSTLATVI, IYIGGVNWALMVGVVLLVLGF, YGVAVTGTMLITTLLMGVVIW, LWLGVPFFCVMLAVDSLFFAA, and VIQGGAFPVIAGIVIFILMST.

This sequence belongs to the HAK/KUP transporter (TC 2.A.72) family.

The protein localises to the cell inner membrane. It catalyses the reaction K(+)(in) + H(+)(in) = K(+)(out) + H(+)(out). Functionally, transport of potassium into the cell. Likely operates as a K(+):H(+) symporter. In Pseudomonas aeruginosa (strain LESB58), this protein is Probable potassium transport system protein Kup.